The primary structure comprises 606 residues: ATP-dependent rRNA helicase spb4 (606 aa).

Residues 1-29 (MSFQSINIDKWLKNAVAAQGFKKMTPVQA) carry the Q motif motif. The 182-residue stretch at 32–213 (IPLFLKNKDL…KIAGLRNSVR (182 aa)) folds into the Helicase ATP-binding domain. 45-52 (AVTGSGKT) is an ATP binding site. A DEAD box motif is present at residues 161 to 164 (DEAD). Residues 246–400 (CMIHLLCTIE…ALDLSRLKVL (155 aa)) enclose the Helicase C-terminal domain. The disordered stretch occupies residues 521–574 (KQKEVKEKRNTRREKRKSKKEFLKAQKNEASNNLKQEIVSKAGAQETENDDLID). Positions 521–601 (KQKEVKEKRN…KSKKRKNQAS (81 aa)) form a coiled coil. The segment covering 529–539 (RNTRREKRKSK) has biased composition (basic residues).

This sequence belongs to the DEAD box helicase family. DDX55/SPB4 subfamily. Component of pre-60S ribosomal complexes.

Its subcellular location is the nucleus. The protein resides in the nucleolus. It catalyses the reaction ATP + H2O = ADP + phosphate + H(+). Functionally, ATP-binding RNA helicase involved in the biogenesis of 60S ribosomal subunits. Binds 90S pre-ribosomal particles and dissociates from pre-60S ribosomal particles after processing of 27SB pre-rRNA. Required for the normal formation of 18S rRNA through the processing of pre-rRNAs at sites A0, A1 and A2, and the normal formation of 25S and 5.8S rRNAs through the processing of pre-rRNAs at sites C1 and C2. The protein is ATP-dependent rRNA helicase spb4 of Schizosaccharomyces pombe (strain 972 / ATCC 24843) (Fission yeast).